We begin with the raw amino-acid sequence, 902 residues long: Ephrin type-B receptor 1-B (902 aa).

In terms of domain architecture, Eph LBD spans 1–119; sequence HRVYVEMRFT…FFKKCPSVVQ (119 aa). Residues 1 to 459 are Extracellular-facing; sequence HRVYVEMRFT…KSELREQLPL (459 aa). Fibronectin type-III domains lie at 240-350 and 351-448; these read VPSG…TNQA and APSS…TEED. 3 N-linked (GlcNAc...) asparagine glycosylation sites follow: Asn-252, Asn-344, and Asn-398. A helical transmembrane segment spans residues 460 to 480; sequence IAGSAAAGVVFIVSLVAISIV. At 481–902 the chain is on the cytoplasmic side; sequence CSRKRTYSKE…QISQSPTSIA (422 aa). One can recognise a Protein kinase domain in the interval 537–800; the sequence is VKIEEVIGAG…EIVNTLDKMI (264 aa). ATP contacts are provided by residues 543–551 and Lys-569; that span reads IGAGEFGEV. Asp-662 (proton acceptor) is an active-site residue. The SAM domain occupies 829 to 893; the sequence is SAFTSVDDWL…LNSIQSMRVQ (65 aa). A PDZ-binding motif is present at residues 900 to 902; the sequence is SIA.

The protein belongs to the protein kinase superfamily. Tyr protein kinase family. Ephrin receptor subfamily. As to quaternary structure, heterotetramer upon binding of the ligand. The heterotetramer is composed of an ephrin dimer and a receptor dimer. Oligomerization is probably required to induce biological responses. In terms of processing, phosphorylated. Autophosphorylation is stimulated by ligands. In terms of tissue distribution, expressed in the embryo in the brain and spinal cord and in the first and fourth visceral arches. Most abundant in adult brain, with lower levels in eye, heart, ovary, oviduct, lung and pharynx.

The protein localises to the cell membrane. It localises to the early endosome membrane. It is found in the cell projection. The protein resides in the dendrite. The enzyme catalyses L-tyrosyl-[protein] + ATP = O-phospho-L-tyrosyl-[protein] + ADP + H(+). Receptor tyrosine kinase which binds promiscuously transmembrane ephrin-B family ligands residing on adjacent cells, leading to contact-dependent bidirectional signaling into neighboring cells. The signaling pathway downstream of the receptor is referred to as forward signaling while the signaling pathway downstream of the ephrin ligand is referred to as reverse signaling. May play a role in axon guidance during nervous system development. May also play an important redundant role with other ephrin-B receptors in development and maturation of dendritic spines and synapse formation. More generally, may play a role in targeted cell migration and adhesion. Upon activation by ephrin-B ligands activates the MAPK/ERK and the JNK signaling cascades to regulate cell migration and adhesion respectively. The chain is Ephrin type-B receptor 1-B (ephb1-b) from Xenopus laevis (African clawed frog).